We begin with the raw amino-acid sequence, 886 residues long: Putative leucine-rich repeat receptor-like serine/threonine-protein kinase At2g14440 (886 aa).

The signal sequence occupies residues 1 to 23 (METRSKLMLLACATFSIISLVKS). At 24–528 (QNQQGFISLY…KHQPKSWLVA (505 aa)) the chain is on the extracellular side. 10 N-linked (GlcNAc...) asparagine glycosylation sites follow: asparagine 49, asparagine 69, asparagine 232, asparagine 236, asparagine 259, asparagine 292, asparagine 434, asparagine 447, asparagine 458, and asparagine 471. LRR repeat units lie at residues 413–436 (RIIS…QNLT), 437–460 (MLRE…QNLT), 461–483 (MLRE…LATI), and 485–507 (PLLV…LQDR). A helical membrane pass occupies residues 529–549 (IVASISCVAVTIIVLVLIFIF). At 550–886 (RRRKSSTRKV…TFISDIPSAR (337 aa)) the chain is on the cytoplasmic side. The 270-residue stretch at 581 to 850 (NNFEVVLGKG…NMTRVAHELN (270 aa)) folds into the Protein kinase domain. ATP is bound by residues 587 to 595 (LGKGGFGVV) and lysine 608. A Phosphotyrosine modification is found at tyrosine 653. Catalysis depends on aspartate 705, which acts as the Proton acceptor. Serine 739 bears the Phosphoserine mark. Phosphothreonine is present on residues threonine 740 and threonine 745. A Phosphotyrosine modification is found at tyrosine 753. The tract at residues 863–886 (SQDQNSSKSSGHTVTFISDIPSAR) is disordered. A compositionally biased stretch (polar residues) spans 865–878 (DQNSSKSSGHTVTF).

Belongs to the protein kinase superfamily. Ser/Thr protein kinase family.

The protein resides in the cell membrane. It carries out the reaction L-seryl-[protein] + ATP = O-phospho-L-seryl-[protein] + ADP + H(+). It catalyses the reaction L-threonyl-[protein] + ATP = O-phospho-L-threonyl-[protein] + ADP + H(+). The polypeptide is Putative leucine-rich repeat receptor-like serine/threonine-protein kinase At2g14440 (Arabidopsis thaliana (Mouse-ear cress)).